Here is a 169-residue protein sequence, read N- to C-terminus: Crossover junction endodeoxyribonuclease RuvC (169 aa).

Catalysis depends on residues Asp-13, Glu-73, and Asp-145. Positions 13, 73, and 145 each coordinate Mg(2+).

This sequence belongs to the RuvC family. As to quaternary structure, homodimer which binds Holliday junction (HJ) DNA. The HJ becomes 2-fold symmetrical on binding to RuvC with unstacked arms; it has a different conformation from HJ DNA in complex with RuvA. In the full resolvosome a probable DNA-RuvA(4)-RuvB(12)-RuvC(2) complex forms which resolves the HJ. Requires Mg(2+) as cofactor.

The protein resides in the cytoplasm. It catalyses the reaction Endonucleolytic cleavage at a junction such as a reciprocal single-stranded crossover between two homologous DNA duplexes (Holliday junction).. In terms of biological role, the RuvA-RuvB-RuvC complex processes Holliday junction (HJ) DNA during genetic recombination and DNA repair. Endonuclease that resolves HJ intermediates. Cleaves cruciform DNA by making single-stranded nicks across the HJ at symmetrical positions within the homologous arms, yielding a 5'-phosphate and a 3'-hydroxyl group; requires a central core of homology in the junction. The consensus cleavage sequence is 5'-(A/T)TT(C/G)-3'. Cleavage occurs on the 3'-side of the TT dinucleotide at the point of strand exchange. HJ branch migration catalyzed by RuvA-RuvB allows RuvC to scan DNA until it finds its consensus sequence, where it cleaves and resolves the cruciform DNA. This chain is Crossover junction endodeoxyribonuclease RuvC, found in Solidesulfovibrio magneticus (strain ATCC 700980 / DSM 13731 / RS-1) (Desulfovibrio magneticus).